The chain runs to 424 residues: Probable methyltransferase EP424R (424 aa).

The Adrift-type SAM-dependent 2'-O-MTase domain occupies 104 to 316 (QIVTNAWLKM…TYIVGKNRLR (213 aa)). Residues Gly-136 and Asp-229 each coordinate S-adenosyl-L-methionine. Lys-269 acts as the Proton acceptor in catalysis.

The protein resides in the virion. This chain is Probable methyltransferase EP424R, found in African swine fever virus (strain Badajoz 1971 Vero-adapted) (Ba71V).